Reading from the N-terminus, the 72-residue chain is Heat-stable enterotoxin C (72 aa).

The first 19 residues, 1–19 (MKKIVFVLTLMLFSFGTLG), serve as a signal peptide directing secretion. Intrachain disulfides connect C60-C65, C61-C69, and C64-C72.

It belongs to the heat-stable enterotoxin family.

The protein localises to the secreted. Its function is as follows. Toxin which activates the particulate form of guanylate cyclase and increases cyclic GMP levels within the host intestinal epithelial cells. Highly toxic. The protein is Heat-stable enterotoxin C (ystC) of Yersinia enterocolitica.